Reading from the N-terminus, the 337-residue chain is Glycerol-3-phosphate dehydrogenase [NAD(P)+] (337 aa).

W11, R30, and K113 together coordinate NADPH. 3 residues coordinate sn-glycerol 3-phosphate: K113, G141, and S143. A145 contributes to the NADPH binding site. K196, D249, S259, R260, and N261 together coordinate sn-glycerol 3-phosphate. K196 acts as the Proton acceptor in catalysis. Residue R260 participates in NADPH binding. NADPH-binding residues include V284 and E286.

Belongs to the NAD-dependent glycerol-3-phosphate dehydrogenase family.

The protein resides in the cytoplasm. The enzyme catalyses sn-glycerol 3-phosphate + NAD(+) = dihydroxyacetone phosphate + NADH + H(+). The catalysed reaction is sn-glycerol 3-phosphate + NADP(+) = dihydroxyacetone phosphate + NADPH + H(+). Its pathway is membrane lipid metabolism; glycerophospholipid metabolism. Catalyzes the reduction of the glycolytic intermediate dihydroxyacetone phosphate (DHAP) to sn-glycerol 3-phosphate (G3P), the key precursor for phospholipid synthesis. The chain is Glycerol-3-phosphate dehydrogenase [NAD(P)+] from Leptothrix cholodnii (strain ATCC 51168 / LMG 8142 / SP-6) (Leptothrix discophora (strain SP-6)).